We begin with the raw amino-acid sequence, 382 residues long: SOX domain-containing protein dichaete (382 aa).

2 disordered regions span residues 53 to 142 (GGSP…EGHI) and 346 to 382 (YPSSSTSSPGSSPGTITPNGMDGSMDSALRRPVPVLY). A compositionally biased stretch (gly residues) spans 60-69 (AGQGVNGSSG). Residues 96 to 123 (NSSIGSAGSLGSQSSLGSNGSGLNSSSG) show a composition bias toward low complexity. The segment at residues 142–210 (IKRPMNAFMV…LHMKEHPDYK (69 aa)) is a DNA-binding region (HMG box). A compositionally biased stretch (low complexity) spans 347-360 (PSSSTSSPGSSPGT).

Initially expressed in a pair-rule-like pattern which is rapidly replaced by strong neuroectoderm expression.

Its subcellular location is the nucleus. In terms of biological role, essential for segmentation and CNS development. May modulate the actions of other transcription factors, including gap and pair-rule proteins. The chain is SOX domain-containing protein dichaete (D) from Drosophila melanogaster (Fruit fly).